The primary structure comprises 68 residues: IDIKRIIEHLPRQRLGVLITDHNVRETLAVCERAYIVSQGHLIAHGTPQQILEDEQVKRVYLGEDFRL.

This sequence belongs to the ABC transporter superfamily. Outer membrane lipopolysaccharide export (TC 1.B.42) family. In terms of assembly, component of the lipopolysaccharide transport and assembly complex. The LptBFG transporter is composed of two ATP-binding proteins (LptB) and two transmembrane proteins (LptF and LptG).

It localises to the cytoplasm. Its subcellular location is the cell inner membrane. Functionally, part of the ABC transporter complex LptBFG involved in the translocation of lipopolysaccharide (LPS) from the inner membrane to the outer membrane. Probably responsible for energy coupling to the transport system. In Klebsiella oxytoca, this protein is Lipopolysaccharide export system ATP-binding protein LptB (lptB).